The following is a 154-amino-acid chain: SsrA-binding protein (154 aa).

Positions 132-154 are disordered; that stretch reads KRESIKKRQDKRDMERALKRGAE.

This sequence belongs to the SmpB family.

The protein localises to the cytoplasm. In terms of biological role, required for rescue of stalled ribosomes mediated by trans-translation. Binds to transfer-messenger RNA (tmRNA), required for stable association of tmRNA with ribosomes. tmRNA and SmpB together mimic tRNA shape, replacing the anticodon stem-loop with SmpB. tmRNA is encoded by the ssrA gene; the 2 termini fold to resemble tRNA(Ala) and it encodes a 'tag peptide', a short internal open reading frame. During trans-translation Ala-aminoacylated tmRNA acts like a tRNA, entering the A-site of stalled ribosomes, displacing the stalled mRNA. The ribosome then switches to translate the ORF on the tmRNA; the nascent peptide is terminated with the 'tag peptide' encoded by the tmRNA and targeted for degradation. The ribosome is freed to recommence translation, which seems to be the essential function of trans-translation. The protein is SsrA-binding protein of Acaryochloris marina (strain MBIC 11017).